A 380-amino-acid polypeptide reads, in one-letter code: MKDVLLIKYGELALKGENRSFFENTLVKNIKYALRDFDGVKVEKTHGRIYVECEKDVEEAIERLKKVFGIVGITRAKEADLDLEEIFKAAVDLMKSHQGKTFKVETKRPNKAFPYNSMEVSRRVGAAVLKNVKNMKVDVHNPDVLLNVEIREKAFLYAGVIEGAGGLPLGTNGKATVLLSGGIDSPVAAWMMMKRGVEVEAVYFHSPPYTSDRAKEKVVDLCKVLSQYGRGMRLHVVHFTDLQLEIYEKCPARLTTIIMRRMMMKIAEKIAQQNGSLALITGESLGQVASQTIESLYVTNSSVSLPVFRPLIGMDKREIIDIAQKIGTYEISIRPYEDCCTIFVPKHPATKPKLEKVLEAEEKMDYQKFIDNFEEEVIEI.

The THUMP domain occupies 58-162; sequence EEAIERLKKV…KAFLYAGVIE (105 aa). ATP is bound by residues 178 to 179, 203 to 204, arginine 260, glycine 282, and glutamine 291; these read LL and YF.

Belongs to the ThiI family.

It is found in the cytoplasm. The enzyme catalyses [ThiI sulfur-carrier protein]-S-sulfanyl-L-cysteine + a uridine in tRNA + 2 reduced [2Fe-2S]-[ferredoxin] + ATP + H(+) = [ThiI sulfur-carrier protein]-L-cysteine + a 4-thiouridine in tRNA + 2 oxidized [2Fe-2S]-[ferredoxin] + AMP + diphosphate. The catalysed reaction is [ThiS sulfur-carrier protein]-C-terminal Gly-Gly-AMP + S-sulfanyl-L-cysteinyl-[cysteine desulfurase] + AH2 = [ThiS sulfur-carrier protein]-C-terminal-Gly-aminoethanethioate + L-cysteinyl-[cysteine desulfurase] + A + AMP + 2 H(+). The protein operates within cofactor biosynthesis; thiamine diphosphate biosynthesis. Functionally, catalyzes the ATP-dependent transfer of a sulfur to tRNA to produce 4-thiouridine in position 8 of tRNAs, which functions as a near-UV photosensor. Also catalyzes the transfer of sulfur to the sulfur carrier protein ThiS, forming ThiS-thiocarboxylate. This is a step in the synthesis of thiazole, in the thiamine biosynthesis pathway. The sulfur is donated as persulfide by IscS. This chain is Probable tRNA sulfurtransferase (thiI), found in Caldanaerobacter subterraneus subsp. tengcongensis (strain DSM 15242 / JCM 11007 / NBRC 100824 / MB4) (Thermoanaerobacter tengcongensis).